Here is a 339-residue protein sequence, read N- to C-terminus: MAPYQSFHIGLLGLALASVWPLSACAITPSFPPAVEQNQQVNGDRQEVQLAQNSDTYTFETFDPNSDEPKLNGKVEKGDVSASISYRQEKHDGYESWFPTVTVKFKNKIVATLEGSESPMPIALLQITDMDRDNPYPAVLFATYTGGAHCCNEVKVFTSNQNGSDWSVRDFGFFNGGPHPAEDLNNDGWDEYVEVDNRFLYLFSSYAGSAAPAQIWALQNGQVVDVSFEPSFQFIHRENAQSMEKDLPEIVAQDSEKNGFLAAYVANKALIGELDEGWQTMLKYYDRESDWGLTNCLEYDDQSNCLNEVKYDSYPDALRAFLVEAGYIEAKFEAENNTL.

The first 26 residues, M1 to A26, serve as a signal peptide directing secretion.

It localises to the cellular thylakoid lumen. This chain is Probable thylakoid lumen protein sll0997, found in Synechocystis sp. (strain ATCC 27184 / PCC 6803 / Kazusa).